The following is a 392-amino-acid chain: Formate-dependent phosphoribosylglycinamide formyltransferase (392 aa).

N(1)-(5-phospho-beta-D-ribosyl)glycinamide contacts are provided by residues 15–16 (EL) and Glu75. ATP-binding positions include Arg107, Lys148, 153 to 158 (SSGKGQ), 188 to 191 (EEFL), and Glu196. Residues 112 to 302 (DLAAGELNLR…EFELHLRAVL (191 aa)) form the ATP-grasp domain. The Mg(2+) site is built by Glu261 and Glu273. Residues Asp280, Lys350, and 357 to 358 (RR) each bind N(1)-(5-phospho-beta-D-ribosyl)glycinamide.

It belongs to the PurK/PurT family. As to quaternary structure, homodimer.

It carries out the reaction N(1)-(5-phospho-beta-D-ribosyl)glycinamide + formate + ATP = N(2)-formyl-N(1)-(5-phospho-beta-D-ribosyl)glycinamide + ADP + phosphate + H(+). The protein operates within purine metabolism; IMP biosynthesis via de novo pathway; N(2)-formyl-N(1)-(5-phospho-D-ribosyl)glycinamide from N(1)-(5-phospho-D-ribosyl)glycinamide (formate route): step 1/1. In terms of biological role, involved in the de novo purine biosynthesis. Catalyzes the transfer of formate to 5-phospho-ribosyl-glycinamide (GAR), producing 5-phospho-ribosyl-N-formylglycinamide (FGAR). Formate is provided by PurU via hydrolysis of 10-formyl-tetrahydrofolate. The polypeptide is Formate-dependent phosphoribosylglycinamide formyltransferase (Synechococcus sp. (strain CC9605)).